Here is a 329-residue protein sequence, read N- to C-terminus: Ketol-acid reductoisomerase (NADP(+)) (329 aa).

A KARI N-terminal Rossmann domain is found at 2 to 181 (VQKYYESDAD…GATRAVVFET (180 aa)). Residues 25–28 (YGSQ), Arg48, Ser52, and 82–85 (DENQ) contribute to the NADP(+) site. The active site involves His107. An NADP(+)-binding site is contributed by Gly133. Positions 182-327 (TFAEETETDL…AEIRGFMPQF (146 aa)) constitute a KARI C-terminal knotted domain. Positions 190, 194, 226, and 230 each coordinate Mg(2+). Substrate is bound at residue Ser251.

This sequence belongs to the ketol-acid reductoisomerase family. Mg(2+) serves as cofactor.

It carries out the reaction (2R)-2,3-dihydroxy-3-methylbutanoate + NADP(+) = (2S)-2-acetolactate + NADPH + H(+). The enzyme catalyses (2R,3R)-2,3-dihydroxy-3-methylpentanoate + NADP(+) = (S)-2-ethyl-2-hydroxy-3-oxobutanoate + NADPH + H(+). The protein operates within amino-acid biosynthesis; L-isoleucine biosynthesis; L-isoleucine from 2-oxobutanoate: step 2/4. It participates in amino-acid biosynthesis; L-valine biosynthesis; L-valine from pyruvate: step 2/4. Its function is as follows. Involved in the biosynthesis of branched-chain amino acids (BCAA). Catalyzes an alkyl-migration followed by a ketol-acid reduction of (S)-2-acetolactate (S2AL) to yield (R)-2,3-dihydroxy-isovalerate. In the isomerase reaction, S2AL is rearranged via a Mg-dependent methyl migration to produce 3-hydroxy-3-methyl-2-ketobutyrate (HMKB). In the reductase reaction, this 2-ketoacid undergoes a metal-dependent reduction by NADPH to yield (R)-2,3-dihydroxy-isovalerate. The polypeptide is Ketol-acid reductoisomerase (NADP(+)) (Methanoculleus marisnigri (strain ATCC 35101 / DSM 1498 / JR1)).